A 60-amino-acid polypeptide reads, in one-letter code: Conotoxin VnMRCL-012 (60 aa).

A signal peptide spans 1 to 22 (MRCLPVFVILLLLIASAPGVDA). The propeptide occupies 23 to 50 (QPKTKYDVPLASRHDFAKKTPKRLSKPR).

This sequence belongs to the conotoxin T superfamily. In terms of processing, contains 2 disulfide bonds that can be either 'C1-C3, C2-C4' or 'C1-C4, C2-C3', since these disulfide connectivities have been observed for conotoxins with cysteine framework V (for examples, see AC P0DQQ7 and AC P81755). Expressed by the venom duct.

The protein resides in the secreted. This Conus ventricosus (Mediterranean cone) protein is Conotoxin VnMRCL-012.